The following is a 466-amino-acid chain: Uronate isomerase (466 aa).

This sequence belongs to the metallo-dependent hydrolases superfamily. Uronate isomerase family.

It carries out the reaction D-glucuronate = D-fructuronate. It catalyses the reaction aldehydo-D-galacturonate = keto-D-tagaturonate. It participates in carbohydrate metabolism; pentose and glucuronate interconversion. This Brucella canis (strain ATCC 23365 / NCTC 10854 / RM-666) protein is Uronate isomerase.